The following is a 178-amino-acid chain: Methylmalonyl-CoA epimerase, mitochondrial (178 aa).

Residues 1 to 38 constitute a mitochondrion transit peptide; it reads MRRVVKAAALAAGATGLFSRVQTSVAIGRSFSTPQSQF. One can recognise a VOC domain in the interval 49–178; that stretch reads RLNHVAVAVP…GGVLVELEQA (130 aa). Position 52 (His-52) interacts with Co(2+). Lys-116 carries the N6-succinyllysine modification. Residue His-124 coordinates Co(2+). Lys-152 carries the post-translational modification N6-acetyllysine; alternate. Lys-152 carries the N6-succinyllysine; alternate modification. Position 174 (Glu-174) interacts with Co(2+).

Belongs to the methylmalonyl-CoA epimerase family.

The protein resides in the mitochondrion. It catalyses the reaction (R)-methylmalonyl-CoA = (S)-methylmalonyl-CoA. In terms of biological role, methylmalonyl-CoA epimerase involved in propionyl-CoA metabolism. The chain is Methylmalonyl-CoA epimerase, mitochondrial from Mus musculus (Mouse).